We begin with the raw amino-acid sequence, 166 residues long: Disulfide bond formation protein B (166 aa).

Topologically, residues 1–11 (MCNKLFAGRRG) are cytoplasmic. A helical transmembrane segment spans residues 12-28 (YFLGFVASFGLVGLALF). The Periplasmic portion of the chain corresponds to 29-46 (LQQKYNLEPCPLCISQRI). Cysteines 38 and 41 form a disulfide. Residues 47-63 (AFMALGILFLLAALHNP) traverse the membrane as a helical segment. Residues 64-69 (GRVGRK) lie on the Cytoplasmic side of the membrane. The chain crosses the membrane as a helical span at residues 70–87 (VYGLLHVIAAATGIGIAA). Residues 88–144 (RHIWIQANPDKVMAECGAGFDYIMETFPLKKALDLIFKGTGECSAIDWTLFGLTIPQ) lie on the Periplasmic side of the membrane. Cys-103 and Cys-130 are joined by a disulfide. The chain crosses the membrane as a helical span at residues 145-163 (LSLIAFVGLGLFAVLLAFH). At 164-166 (KKA) the chain is on the cytoplasmic side.

This sequence belongs to the DsbB family.

The protein localises to the cell inner membrane. Its function is as follows. Required for disulfide bond formation in some periplasmic proteins. Acts by oxidizing the DsbA protein. The polypeptide is Disulfide bond formation protein B (Methylobacillus flagellatus (strain ATCC 51484 / DSM 6875 / VKM B-1610 / KT)).